Here is a 197-residue protein sequence, read N- to C-terminus: ATP-dependent Clp protease proteolytic subunit 1 (197 aa).

The active-site Nucleophile is the Ser96. The active site involves His121.

Belongs to the peptidase S14 family. In terms of assembly, fourteen ClpP subunits assemble into 2 heptameric rings which stack back to back to give a disk-like structure with a central cavity, resembling the structure of eukaryotic proteasomes.

The protein resides in the cytoplasm. It catalyses the reaction Hydrolysis of proteins to small peptides in the presence of ATP and magnesium. alpha-casein is the usual test substrate. In the absence of ATP, only oligopeptides shorter than five residues are hydrolyzed (such as succinyl-Leu-Tyr-|-NHMec, and Leu-Tyr-Leu-|-Tyr-Trp, in which cleavage of the -Tyr-|-Leu- and -Tyr-|-Trp bonds also occurs).. In terms of biological role, cleaves peptides in various proteins in a process that requires ATP hydrolysis. Has a chymotrypsin-like activity. Plays a major role in the degradation of misfolded proteins. This is ATP-dependent Clp protease proteolytic subunit 1 from Synechococcus sp. (strain CC9902).